Consider the following 420-residue polypeptide: Carboxypeptidase A4 (420 aa).

The first 16 residues, 1–16, serve as a signal peptide directing secretion; sequence MKWLLFFGALIGAGIC. The propeptide at 17–113 is activation peptide; it reads GRDKFFGDQV…EMQHNEGIER (97 aa). A protein-binding residues include Pro69, Val71, Asn118, Tyr122, His123, Glu126, and Phe162. Residues 121–415 form the Peptidase M14 domain; it reads AYHPLEAIYH…LGLKTIMEHV (295 aa). Zn(2+)-binding residues include His180 and Glu183. A disulfide bond links Cys249 and Cys272. Asn259 carries an N-linked (GlcNAc...) asparagine glycan. A Zn(2+)-binding site is contributed by His307. The Proton donor/acceptor role is filled by Glu381.

It belongs to the peptidase M14 family. In terms of assembly, interacts with LXN. Requires Zn(2+) as cofactor.

Its subcellular location is the secreted. In terms of biological role, metalloprotease that cleaves hydrophobic C-terminal residues with a preference for -Phe, -Leu, -Ile, -Met, -Tyr and -Val. May function in peptide hormone and/or neuropeptide catabolism. The protein is Carboxypeptidase A4 (Cpa4) of Mus musculus (Mouse).